The chain runs to 254 residues: NFU1 iron-sulfur cluster scaffold homolog, mitochondrial (254 aa).

Residues 1–9 constitute a mitochondrion transit peptide; the sequence is MAATARRGW. The segment at 173-241 is nifU; it reads IKELLDTRIR…IPEVEGVEQV (69 aa). Residues Cys210 and Cys213 each coordinate [4Fe-4S] cluster.

It belongs to the NifU family. Monomer and homohexamer; the apo-NFU1 is a monomer, while the holo-NFU1 is a hexamer composed of a trimer of dimer that is probably linked by some 4Fe-4S cluster. Interacts with HIRA and EPM2A/laforin. Interacts with BOLA3. Interacts with HSPA9. In terms of tissue distribution, ubiquitous. Expression in adult lung is weak compared to fetal lung.

Its subcellular location is the mitochondrion. The protein localises to the cytoplasm. It localises to the cytosol. Iron-sulfur cluster scaffold protein which can assemble [4Fe-4S] clusters and deliver them to target proteins. The chain is NFU1 iron-sulfur cluster scaffold homolog, mitochondrial (NFU1) from Homo sapiens (Human).